The following is a 152-amino-acid chain: Transcription factor ATOH7 (152 aa).

In terms of domain architecture, bHLH spans Arg40–Leu92.

As to quaternary structure, forms a heterodimer with TCF3 isoform E47; interaction may be required for DNA-binding in certain situations.

Its subcellular location is the nucleus. The protein resides in the perikaryon. It localises to the cell projection. The protein localises to the axon. Transcription factor that binds to DNA at the consensus sequence 5'-CAG[GC]TG-3'. Dimerization with TCF3 isoform E47 may be required in certain situations. Binds to gene promoters and enhancer elements, and thereby regulates a transcriptional program of retinal ganglion cell (RGC) determinant genes. Although the exact mechanism is not certain, retinal transcription regulation by ATOH7 has a role in RGC determination and survival, photoreceptor population development, targeting of RGC axons to the optic nerve and development of the retino-hypothalamic tract. Binds to its own promoter and enhancer sequences, suggesting autoregulation of ATOH7 transcription. Required for retinal circadian rhythm photoentrainment. Plays a role in brainstem auditory signaling and binaural processing. This chain is Transcription factor ATOH7, found in Homo sapiens (Human).